The sequence spans 144 residues: Large ribosomal subunit protein uL15 (144 aa).

A disordered region spans residues 1-57 (MKLNDLSPAPGSRREKHRPGRGIGSGLGKTGGRGHKGQTSRSGGTIAPGFEGGQQPL). Positions 21-31 (RGIGSGLGKTG) are enriched in gly residues.

This sequence belongs to the universal ribosomal protein uL15 family. In terms of assembly, part of the 50S ribosomal subunit.

Binds to the 23S rRNA. The chain is Large ribosomal subunit protein uL15 from Pseudomonas fluorescens (strain ATCC BAA-477 / NRRL B-23932 / Pf-5).